The sequence spans 653 residues: MAAEMDWDKTVGAAEDVRRIFEHIPAILVGLEGPDHRFVAVNAAYRGFSPLLDTVGQPAREVYPELEGQQIYEMLDRVYQTGEPQSGSEWRLQTDYDGSGVEERYFDFVVTPRRRADGSIEGVQLIVDDVTSRVRARQAAEARVEELSERYRNVRDSATVMQQALLAASVPVVPGADIAAEYLVAAEDTAAGGDWFDALALGDRLVLVVGDVVGHGVEAAAVMSQLRTALRMQISAGYTVVEALEAVDRFHKQVPGSKSATMCVGSLDFTSGEFQYCTAGHPPPLLVTADASARYVEPTGAGPLGSGTGFPVRSEVLNIGDAILFYTDGLIERPGRPLEASTAEFADLAASIASGSGGFVLDAPARPIDRLCSDTLELLLRSTGYNDDVTLLAMQRRAPTPPLHITLDATINAARTVRAQLREWLAEIGADHSDIADIVHAISEFVENAVEHGYATDVSKGIVVEAALAGDGNVRASVIDRGQWKDHRDGARGRGRGLAMAEALVSEARIMHGAGGTTATLTHRLSRPARFVTDTMVRRAAFQQTIDSEFVSLVESGRIVVRGDVDSTTAATLDRQIAVESRSGIAPVTIDLSAVTHLGSAGVGALAAACDRARKQGTECVLVAPPGSPAHHVLSLVQLPVVGADTEDIFAQE.

Positions 86 to 142 constitute a PAC domain; it reads SGSEWRLQTDYDGSGVEERYFDFVVTPRRRADGSIEGVQLIVDDVTSRVRARQAAEA. The region spanning 177–396 is the PPM-type phosphatase domain; the sequence is DIAAEYLVAA…DDVTLLAMQR (220 aa). Residues Asp-211, Val-212, Asp-328, and Asp-387 each contribute to the Mn(2+) site. Positions 397-544 are anti-sigma factor kinase region; sequence RAPTPPLHIT…TMVRRAAFQQ (148 aa). The 108-residue stretch at 546-653 folds into the STAS domain; the sequence is IDSEFVSLVE…ADTEDIFAQE (108 aa). Phosphoserine is present on Ser-600.

Mg(2+) is required as a cofactor. Requires Mn(2+) as cofactor. Autophosphorylated.

The enzyme catalyses O-phospho-L-seryl-[protein] + H2O = L-seryl-[protein] + phosphate. The catalysed reaction is O-phospho-L-threonyl-[protein] + H2O = L-threonyl-[protein] + phosphate. It carries out the reaction L-seryl-[protein] + ATP = O-phospho-L-seryl-[protein] + ADP + H(+). It catalyses the reaction L-threonyl-[protein] + ATP = O-phospho-L-threonyl-[protein] + ADP + H(+). Its function is as follows. Primarily acts as an independent SigF regulator that is sensitive to the osmosensory signal, mediating the cross talk of PknD with the SigF regulon. Possesses both phosphatase and kinase activities. The kinase domain functions as a classic anti-sigma factor-like kinase to phosphorylate the anti-anti-sigma factor domain at the canonical regulatory site, and the phosphatase domain antagonizes this activity. The polypeptide is Multidomain regulatory protein MT1410 (Mycobacterium tuberculosis (strain CDC 1551 / Oshkosh)).